A 276-amino-acid chain; its full sequence is Rhomboid protease GlpG (276 aa).

6 helical membrane passes run 94–114 (AGPL…LMQI), 142–162 (ALLH…WYLG), 168–188 (VLGT…SGWA), 193–213 (SGTY…YVWL), 229–249 (LMAF…GMSI), and 250–270 (ANAA…WDTY). S201 acts as the Nucleophile in catalysis. The active site involves H254.

This sequence belongs to the peptidase S54 family.

It localises to the cell inner membrane. It carries out the reaction Cleaves type-1 transmembrane domains using a catalytic dyad composed of serine and histidine that are contributed by different transmembrane domains.. In terms of biological role, rhomboid-type serine protease that catalyzes intramembrane proteolysis. The polypeptide is Rhomboid protease GlpG (Pectobacterium atrosepticum (strain SCRI 1043 / ATCC BAA-672) (Erwinia carotovora subsp. atroseptica)).